Consider the following 424-residue polypeptide: UPF0597 protein Sbal_3070 (424 aa).

It belongs to the UPF0597 family.

The protein is UPF0597 protein Sbal_3070 of Shewanella baltica (strain OS155 / ATCC BAA-1091).